The primary structure comprises 838 residues: Leucine--tRNA ligase (838 aa).

The 'HIGH' region signature appears at 36-46; that stretch reads PYPSGKIHMGH. A 'KMSKS' region motif is present at residues 611-615; the sequence is KMSKS. Lys-614 is an ATP binding site.

Belongs to the class-I aminoacyl-tRNA synthetase family.

It localises to the cytoplasm. It catalyses the reaction tRNA(Leu) + L-leucine + ATP = L-leucyl-tRNA(Leu) + AMP + diphosphate. The polypeptide is Leucine--tRNA ligase (Wolbachia sp. subsp. Drosophila simulans (strain wRi)).